The sequence spans 400 residues: Chorismate synthase (400 aa).

Positions 40 and 46 each coordinate NADP(+). FMN is bound by residues 135-137, 257-258, glycine 301, 316-320, and arginine 342; these read RAS, QA, and KPIST.

Belongs to the chorismate synthase family. Homotetramer. It depends on FMNH2 as a cofactor.

It catalyses the reaction 5-O-(1-carboxyvinyl)-3-phosphoshikimate = chorismate + phosphate. It functions in the pathway metabolic intermediate biosynthesis; chorismate biosynthesis; chorismate from D-erythrose 4-phosphate and phosphoenolpyruvate: step 7/7. Its function is as follows. Catalyzes the anti-1,4-elimination of the C-3 phosphate and the C-6 proR hydrogen from 5-enolpyruvylshikimate-3-phosphate (EPSP) to yield chorismate, which is the branch point compound that serves as the starting substrate for the three terminal pathways of aromatic amino acid biosynthesis. This reaction introduces a second double bond into the aromatic ring system. The polypeptide is Chorismate synthase (Tropheryma whipplei (strain TW08/27) (Whipple's bacillus)).